The following is a 323-amino-acid chain: Digestive cysteine proteinase 2 (323 aa).

A signal peptide spans 1-16 (MKVAVLFLCGVALAAA). Positions 17–107 (SPSWEHFKGK…FYPKKETGPQ (91 aa)) are cleaved as a propeptide — activation peptide. Cystine bridges form between Cys-128–Cys-171, Cys-162–Cys-204, and Cys-263–Cys-312. Cys-131 is a catalytic residue. Residues His-270 and Asn-290 contribute to the active site.

It belongs to the peptidase C1 family.

Inhibited by E-64, antipain, leupeptin, heavy metal ions, iodoacetic acid, dithionitrobenzene, p-hydroxymercuri-benzoate; activated by mercaptoethanol and dithiothreitol. The polypeptide is Digestive cysteine proteinase 2 (LCP2) (Homarus americanus (American lobster)).